The following is a 661-amino-acid chain: Transcription factor ccg-8 (661 aa).

A compositionally biased stretch (basic residues) spans 1 to 11 (MEHHHHHRHMH). 4 disordered regions span residues 1–69 (MEHH…QADN), 107–243 (SASS…LDDP), 255–279 (LKTD…DQNQ), and 354–398 (RTKS…RRTS). Low complexity-rich tracts occupy residues 23 to 43 (HQQY…QHQQ) and 107 to 140 (SASS…SSNR). Positions 173-187 (DHSLPSIASLNVGSS) are enriched in polar residues. The span at 192–203 (QPTPTPQPPPKF) shows a compositional bias: pro residues. Over residues 357–366 (SSSDTRESGQ) the composition is skewed to basic and acidic residues.

Its function is as follows. Transcription factor that plays a pivotal role in azole adaptive responses by regulating the drug accumulation in the cells. Affects the transcriptional responses to ketoconazole of many genes, including the target gene (erg11), an azole transporter gene (cdr4), a hexose transporter gene (hxt13), a stress response gene (kts-1), two transcription factor genes (named kts-2 and fsd-1/ndt80). Also regulates phospholipid synthesis that is not involved in azole resistance. The sequence is that of Transcription factor ccg-8 from Neurospora crassa (strain ATCC 24698 / 74-OR23-1A / CBS 708.71 / DSM 1257 / FGSC 987).